The following is a 77-amino-acid chain: MGSFSIWHWLIVLVIVMLVFGTKKLRNIGQDLGGAVKGFKDGMKDGEGKAAADPAQSKELRDSTTIDVEAKEKTRQQ.

Residues 1–21 (MGSFSIWHWLIVLVIVMLVFG) form a helical membrane-spanning segment. The tract at residues 46–77 (GEGKAAADPAQSKELRDSTTIDVEAKEKTRQQ) is disordered.

It belongs to the TatA/E family. In terms of assembly, the Tat system comprises two distinct complexes: a TatABC complex, containing multiple copies of TatA, TatB and TatC subunits, and a separate TatA complex, containing only TatA subunits. Substrates initially bind to the TatABC complex, which probably triggers association of the separate TatA complex to form the active translocon.

Its subcellular location is the cell inner membrane. Its function is as follows. Part of the twin-arginine translocation (Tat) system that transports large folded proteins containing a characteristic twin-arginine motif in their signal peptide across membranes. TatA could form the protein-conducting channel of the Tat system. The sequence is that of Sec-independent protein translocase protein TatA from Cupriavidus necator (strain ATCC 17699 / DSM 428 / KCTC 22496 / NCIMB 10442 / H16 / Stanier 337) (Ralstonia eutropha).